We begin with the raw amino-acid sequence, 226 residues long: UPF0758 protein Daci_1904 (226 aa).

The region spanning 104-226 (ALASPEAVAR…SLSMAGQGML (123 aa)) is the MPN domain. Residues H175, H177, and D188 each contribute to the Zn(2+) site. The short motif at 175–188 (HNHPSGQVQASAAD) is the JAMM motif element.

The protein belongs to the UPF0758 family.

This chain is UPF0758 protein Daci_1904, found in Delftia acidovorans (strain DSM 14801 / SPH-1).